The primary structure comprises 404 residues: NADH-quinone oxidoreductase subunit D (404 aa).

It belongs to the complex I 49 kDa subunit family. In terms of assembly, NDH-1 is composed of 14 different subunits. Subunits NuoB, C, D, E, F, and G constitute the peripheral sector of the complex.

It localises to the cell inner membrane. It catalyses the reaction a quinone + NADH + 5 H(+)(in) = a quinol + NAD(+) + 4 H(+)(out). Functionally, NDH-1 shuttles electrons from NADH, via FMN and iron-sulfur (Fe-S) centers, to quinones in the respiratory chain. The immediate electron acceptor for the enzyme in this species is believed to be ubiquinone. Couples the redox reaction to proton translocation (for every two electrons transferred, four hydrogen ions are translocated across the cytoplasmic membrane), and thus conserves the redox energy in a proton gradient. In Leptospira borgpetersenii serovar Hardjo-bovis (strain JB197), this protein is NADH-quinone oxidoreductase subunit D.